Consider the following 456-residue polypeptide: MLNNAMSVVILAAGKGTRMYSDLPKVLHTLAGKAMVQHVIDAANELGAAHVHLVYGHGGDLLKQALKDDNLNWVLQAEQLGTGHAMQQAAPFFADDEDILMLYGDVPLISVETLQRLRDAKPQGGIGLLTVKLDDPTGYGRITRENGKVTGIVEHKDATDEQRQIQEINTGILIANGADMKRWLAKLTNNNAQGEYYITDIIALAYQEGREIVAVHPQRLSEVEGVNNRLQLSRLERVYQSEQAEKLLLAGVMLRDPARFDLRGTLTHGRDVEIDTNVIIEGNVTLGHRVKIGTGCVIKNSVIGDDCEISPYTVVEDANLAAACTIGPFARLRPGAELLEGAHVGNFVEMKKARLGKGTKAGHLTYLGDAEIGDNVNIGAGTITCNYDGANKFKTIIGDDVFVGSDTQLVAPVTVGKGATIAAGTTVTRNVGENALAISRVPQTQKEGWRRPVKKK.

Positions Met-1–Arg-229 are pyrophosphorylase. UDP-N-acetyl-alpha-D-glucosamine contacts are provided by residues Leu-11–Gly-14, Lys-25, Gln-76, Gly-81–Thr-82, Tyr-103–Asp-105, Gly-140, Glu-154, Asn-169, and Asn-227. Asp-105 lines the Mg(2+) pocket. Asn-227 is a Mg(2+) binding site. The segment at Leu-230–Ala-250 is linker. An N-acetyltransferase region spans residues Gly-251–Lys-456. UDP-N-acetyl-alpha-D-glucosamine contacts are provided by Arg-333 and Lys-351. His-363 acts as the Proton acceptor in catalysis. 2 residues coordinate UDP-N-acetyl-alpha-D-glucosamine: Tyr-366 and Asn-377. Acetyl-CoA is bound by residues Ala-380, Asn-386–Tyr-387, Ser-405, Ala-423, and Arg-440.

The protein in the N-terminal section; belongs to the N-acetylglucosamine-1-phosphate uridyltransferase family. It in the C-terminal section; belongs to the transferase hexapeptide repeat family. In terms of assembly, homotrimer. It depends on Mg(2+) as a cofactor.

It localises to the cytoplasm. The catalysed reaction is alpha-D-glucosamine 1-phosphate + acetyl-CoA = N-acetyl-alpha-D-glucosamine 1-phosphate + CoA + H(+). It carries out the reaction N-acetyl-alpha-D-glucosamine 1-phosphate + UTP + H(+) = UDP-N-acetyl-alpha-D-glucosamine + diphosphate. Its pathway is nucleotide-sugar biosynthesis; UDP-N-acetyl-alpha-D-glucosamine biosynthesis; N-acetyl-alpha-D-glucosamine 1-phosphate from alpha-D-glucosamine 6-phosphate (route II): step 2/2. The protein operates within nucleotide-sugar biosynthesis; UDP-N-acetyl-alpha-D-glucosamine biosynthesis; UDP-N-acetyl-alpha-D-glucosamine from N-acetyl-alpha-D-glucosamine 1-phosphate: step 1/1. It functions in the pathway bacterial outer membrane biogenesis; LPS lipid A biosynthesis. Its function is as follows. Catalyzes the last two sequential reactions in the de novo biosynthetic pathway for UDP-N-acetylglucosamine (UDP-GlcNAc). The C-terminal domain catalyzes the transfer of acetyl group from acetyl coenzyme A to glucosamine-1-phosphate (GlcN-1-P) to produce N-acetylglucosamine-1-phosphate (GlcNAc-1-P), which is converted into UDP-GlcNAc by the transfer of uridine 5-monophosphate (from uridine 5-triphosphate), a reaction catalyzed by the N-terminal domain. The polypeptide is Bifunctional protein GlmU (Shigella flexneri serotype 5b (strain 8401)).